Here is a 504-residue protein sequence, read N- to C-terminus: Prenylcysteine oxidase 1 (504 aa).

A signal peptide spans 1–28 (MGRFAATLVGSLFGLGLLLCGLGRLASA). Asparagine 196, asparagine 322, and asparagine 352 each carry an N-linked (GlcNAc...) asparagine glycan.

The protein belongs to the prenylcysteine oxidase family. Requires FAD as cofactor. Expressed mainly in cerebrum.

It localises to the lysosome. It carries out the reaction an S-polyprenyl-L-cysteine + O2 + H2O = a polyprenal + L-cysteine + H2O2. It catalyses the reaction S-(2E,6E)-farnesyl-L-cysteine + O2 + H2O = (2E,6E)-farnesal + L-cysteine + H2O2. The catalysed reaction is [(2E,6E,10E)-geranylgeranyl]-L-cysteine + O2 + H2O = (2E,6E,10E)-geranylgeranial + L-cysteine + H2O2. Functionally, prenylcysteine oxidase that cleaves the thioether bond of prenyl-L-cysteines, such as farnesylcysteine and geranylgeranylcysteine. Only active against free prenylcysteines and not prenylcysteine residues within prenylated proteins or peptides. Involved in the final step in the degradation of prenylated proteins, by degrading prenylcysteines after the protein has been degraded. The polypeptide is Prenylcysteine oxidase 1 (Rattus norvegicus (Rat)).